The primary structure comprises 800 residues: DNA topoisomerase 4 subunit A (800 aa).

Residues 31–496 (LPDVRDGLKP…ISEIKIDKEV (466 aa)) enclose the Topo IIA-type catalytic domain. Residue Tyr119 is the O-(5'-phospho-DNA)-tyrosine intermediate of the active site.

It belongs to the type II topoisomerase GyrA/ParC subunit family. ParC type 2 subfamily. As to quaternary structure, heterotetramer composed of ParC and ParE.

It localises to the cell membrane. It carries out the reaction ATP-dependent breakage, passage and rejoining of double-stranded DNA.. Topoisomerase IV is essential for chromosome segregation. It relaxes supercoiled DNA. Performs the decatenation events required during the replication of a circular DNA molecule. The protein is DNA topoisomerase 4 subunit A of Staphylococcus epidermidis (strain ATCC 12228 / FDA PCI 1200).